The primary structure comprises 306 residues: MKPTAEILASIIEEVRPLTGQGKVADYIPALAKVPSEKLGIAVFTNQGEVISAGDAQEGFSIQSISKVLSLTLAMGLYQPNELWSRVGKEPSGQAFNSLIQLEMEHGIPRNPFINAGAIVVCDMLQSRLSAPRQRLLEFVRQLSGEPLIAYDKVVAASEMMHSDRNAAIAYLMRSFGNFHNEVIPVLHNYFHACALKMSCVELAKTFSYLANKGVSVVTGETVITPTQSKQTNALLATCGLYDGAGEFAYRVGMPGKSGVGGGIIAVVPGEMTIAVWSPALDQSGNSLAGTRALELLAQRIGRSIF.

Substrate-binding residues include S64, N115, E159, N166, Y190, Y242, and V260.

It belongs to the glutaminase family. In terms of assembly, homotetramer.

It catalyses the reaction L-glutamine + H2O = L-glutamate + NH4(+). This Vibrio cholerae serotype O1 (strain ATCC 39541 / Classical Ogawa 395 / O395) protein is Glutaminase.